A 69-amino-acid polypeptide reads, in one-letter code: DNA gyrase inhibitor YacG (69 aa).

A disordered region spans residues 1–28 (MSGEGKKHGSNVEPLRPTRPCPECGRPS). Positions 21, 24, 36, and 40 each coordinate Zn(2+).

The protein belongs to the DNA gyrase inhibitor YacG family. Interacts with GyrB. Zn(2+) serves as cofactor.

Inhibits all the catalytic activities of DNA gyrase by preventing its interaction with DNA. Acts by binding directly to the C-terminal domain of GyrB, which probably disrupts DNA binding by the gyrase. The polypeptide is DNA gyrase inhibitor YacG (Sinorhizobium fredii (strain NBRC 101917 / NGR234)).